The following is a 336-amino-acid chain: Protein-glutamate methylesterase/protein-glutamine glutaminase 2 (336 aa).

In terms of domain architecture, Response regulatory spans 2–119; it reads KIAIVNDMPM…PNPKEAAAPL (118 aa). A 4-aspartylphosphate modification is found at Asp53. Residues 147–336 form the CheB-type methylesterase domain; that stretch reads PSRRDRLVAI…APRLIEVFTQ (190 aa). Active-site residues include Ser159, His186, and Asp279.

It belongs to the CheB family. Post-translationally, phosphorylated by CheA. Phosphorylation of the N-terminal regulatory domain activates the methylesterase activity.

The protein localises to the cytoplasm. The enzyme catalyses [protein]-L-glutamate 5-O-methyl ester + H2O = L-glutamyl-[protein] + methanol + H(+). It catalyses the reaction L-glutaminyl-[protein] + H2O = L-glutamyl-[protein] + NH4(+). In terms of biological role, involved in chemotaxis. Part of a chemotaxis signal transduction system that modulates chemotaxis in response to various stimuli. Catalyzes the demethylation of specific methylglutamate residues introduced into the chemoreceptors (methyl-accepting chemotaxis proteins or MCP) by CheR. Also mediates the irreversible deamidation of specific glutamine residues to glutamic acid. This is Protein-glutamate methylesterase/protein-glutamine glutaminase 2 from Pseudomonas syringae pv. syringae (strain B728a).